A 383-amino-acid chain; its full sequence is S-adenosylmethionine synthase (383 aa).

Position 15 (histidine 15) interacts with ATP. Aspartate 17 contacts Mg(2+). Residue glutamate 43 participates in K(+) binding. Residues glutamate 56 and glutamine 99 each contribute to the L-methionine site. Positions 99 to 109 are flexible loop; that stretch reads QSPDINQGVDR. Residues 164-166, 230-231, aspartate 239, 245-246, alanine 262, and lysine 266 each bind ATP; these read DAK, RF, and RK. Aspartate 239 provides a ligand contact to L-methionine. Lysine 270 is a binding site for L-methionine.

Belongs to the AdoMet synthase family. Homotetramer; dimer of dimers. Mg(2+) is required as a cofactor. K(+) serves as cofactor.

It is found in the cytoplasm. It carries out the reaction L-methionine + ATP + H2O = S-adenosyl-L-methionine + phosphate + diphosphate. It functions in the pathway amino-acid biosynthesis; S-adenosyl-L-methionine biosynthesis; S-adenosyl-L-methionine from L-methionine: step 1/1. Its function is as follows. Catalyzes the formation of S-adenosylmethionine (AdoMet) from methionine and ATP. The overall synthetic reaction is composed of two sequential steps, AdoMet formation and the subsequent tripolyphosphate hydrolysis which occurs prior to release of AdoMet from the enzyme. This chain is S-adenosylmethionine synthase, found in Shewanella putrefaciens (strain CN-32 / ATCC BAA-453).